Consider the following 432-residue polypeptide: G-protein coupled receptor 22 (432 aa).

Topologically, residues 1-45 (MCFSPVLEINMQSESNVTVRDDIEDIDTNMYQPLSYPLSFQVSLT) are cytoplasmic. A helical membrane pass occupies residues 46–66 (GFLMLEIVLGLGSNLTVLVLY). Over 67 to 85 (CMKSNLISSVSNIITMNLH) the chain is Extracellular. The helical transmembrane segment at 86–106 (VLDVIICVGCIPLTIVILLLS) threads the bilayer. Over 107 to 115 (LERNTALIC) the chain is Cytoplasmic. A helical transmembrane segment spans residues 116 to 136 (CFHEACVSFASVSTAINVFAI). Residues 137 to 156 (TLDRYDISVKPANRILTMGR) lie on the Extracellular side of the membrane. A helical membrane pass occupies residues 157–177 (AVMLMTSIWIFSFFSFLIPFI). Residues 178-208 (EVNFFSLQSGNAWENKTLLCVSTSEYYTELG) are Cytoplasmic-facing. The helical transmembrane segment at 209–229 (MYYHLLVQIPIFFFTVIVMLI) threads the bilayer. Residues 230-314 (TYTKILQALN…ERQKRVFKMS (85 aa)) are Extracellular-facing. Residues 315–335 (LLIISTFLLCWTPISVLNTTI) form a helical membrane-spanning segment. The Cytoplasmic portion of the chain corresponds to 336–348 (LCLGPSDLLVKLR). The chain crosses the membrane as a helical span at residues 349–369 (LCFLVMAYGTTIFHPLLYAFT). Residues 370-432 (RQKFQKVLKS…KCLVPQVVTD (63 aa)) lie on the Extracellular side of the membrane.

This sequence belongs to the G-protein coupled receptor 1 family. As to expression, abundant levels detected in the brain. High expression in the heart (at protein level). No detectable expression in other peripheral tissues.

It localises to the cell membrane. In terms of biological role, orphan G-protein coupled receptor. Seems to act through a G(i)/G(o) mediated pathway. May be involved in ciliogenesis. The sequence is that of G-protein coupled receptor 22 from Rattus norvegicus (Rat).